Consider the following 223-residue polypeptide: MQLKPMEINPEMLNKVLARLGVAGQWRFVDVLGLEEETLGSVPAPACALLLLFPLTAQHENFRKKQIEELKGQEVSPKVYFMKQTIGNSCGTIGLIHAVANNQDKLEFEDGSVLKQFLSETEKLSPEDRAKCFEKNEAIQAAHDAVAQEGQCRVDDKVNFHFILFNNVDGHLYELDGRMPFPVNHGASSEDLLLQDAAKVCREFTEREQGEVRFSAVALCKAA.

N-acetylmethionine is present on Met-1. Residues 2–221 (QLKPMEINPE…VRFSAVALCK (220 aa)) enclose the UCH catalytic domain. The interval 5–10 (PMEINP) is interaction with ubiquitin. The active-site Nucleophile is the Cys-90. Ser-125 bears the Phosphoserine mark. His-161 functions as the Proton donor in the catalytic mechanism. The interaction with ubiquitin stretch occupies residues 211-216 (EVRFSA). Cys-220 is lipidated: S-farnesyl cysteine. Positions 221-223 (KAA) are cleaved as a propeptide — removed in mature form.

Belongs to the peptidase C12 family. Monomer. Homodimer. Interacts with COPS5 and SNCA. O-glycosylated.

It is found in the cytoplasm. Its subcellular location is the endoplasmic reticulum membrane. The catalysed reaction is Thiol-dependent hydrolysis of ester, thioester, amide, peptide and isopeptide bonds formed by the C-terminal Gly of ubiquitin (a 76-residue protein attached to proteins as an intracellular targeting signal).. In terms of biological role, ubiquitin-protein hydrolase involved both in the processing of ubiquitin precursors and of ubiquitinated proteins. This enzyme is a thiol protease that recognizes and hydrolyzes a peptide bond at the C-terminal glycine of ubiquitin. Also binds to free monoubiquitin and may prevent its degradation in lysosomes. The homodimer may have ATP-independent ubiquitin ligase activity. This is Ubiquitin carboxyl-terminal hydrolase isozyme L1 (UCHL1) from Equus caballus (Horse).